A 300-amino-acid polypeptide reads, in one-letter code: MSSSTVMADGFEEIEVDVVSVWKEGYAYENRGNSSVQQKITMTKGMKNLNSETKTLTATHTLGRTLKVGDPFEIASVEVSYTFSHQKSQVSMTQTEVYSSQVIEHTVTIPPNKKFTRWKLNADVGGTGIEYMYLIDEVTAIGADLTIPEVNKSRAKILVGRQIHLGETEIRIKHAERKEYMTVISRKSWPAATLGNSNLFKFVLFEDSSGIRIKTLNTMYPGYEWAYSSDQGGIYFDESSDNPKQRWALSKAMPLRHGDVVTFRNNFFTNSGMCYDDGPATNVYCLEKREDKWILEVVNT.

The segment at 12–35 (EEIEVDVVSVWKEGYAYENRGNSS) is N-terminal cap domain. The beta-hairpin domain stretch occupies residues 36–109 (VQQKITMTKG…SQVIEHTVTI (74 aa)). Residues 110 to 158 (PPNKKFTRWKLNADVGGTGIEYMYLIDEVTAIGADLTIPEVNKSRAKIL) form an N-terminal cap domain region. The tract at residues 159–299 (VGRQIHLGET…EDKWILEVVN (141 aa)) is C-terminal receptor-binding domain. Lys187, Ser229, Tyr235, and Tyr284 together coordinate an N-(acyl)-sphingosylphosphocholine. A disulfide bridge connects residues Cys274 and Cys285.

Belongs to the lysenin family. In terms of assembly, binds to sphingomyelin as a monomer by using its C-terminal domain. Forms a nonamer when sphingomyelin/LRP-1 ratio is lower than ca 500. Oligomerization, but not binding, is influenced by the fluidity of sphingomyelin. As to expression, expressed by coelomocytes.

Its subcellular location is the secreted. The protein resides in the target cell membrane. Functionally, pore-forming toxin that specifically binds sphingomyelin in the plasma membrane of various cells. Has hemolytic activity. Binding and hemolytic activities of this toxin are 10 times less than those of lysenin and lysenin-related protein 2. The chain is Lysenin-related protein 1 from Eisenia fetida (Red wiggler worm).